Reading from the N-terminus, the 351-residue chain is Probable glucuronosyltransferase Os10g0205300 (351 aa).

Residues 1-11 (MAAPPCPPRRP) are Cytoplasmic-facing. The helical; Signal-anchor for type II membrane protein transmembrane segment at 12-32 (ISAPCFLLCFLLGFVAGLFPF) threads the bilayer. Residues 33–351 (AHRHLHLDLH…PLKKEARPLL (319 aa)) lie on the Lumenal side of the membrane. Residues 138–169 (SSPVPDAPQDRPRRRGRRQDRPAVDSRARQRN) form a disordered region. Residues 156-169 (QDRPAVDSRARQRN) are compositionally biased toward basic and acidic residues. The N-linked (GlcNAc...) asparagine glycan is linked to asparagine 259.

The protein belongs to the glycosyltransferase 43 family.

Its subcellular location is the golgi apparatus membrane. Its function is as follows. Involved in the synthesis of glucuronoxylan hemicellulose in secondary cell walls. This is Probable glucuronosyltransferase Os10g0205300 from Oryza sativa subsp. japonica (Rice).